The sequence spans 716 residues: MRRNKPKKQNHKEKKKSLPIRLNILFLAAFVIFTWIIVELGIKQIVQGDDYKNQANKQEQSEVSSAVPRGKIYDRNFNAIVTNKALNAITYTRSKSTTQEQRLKIAKKLSDMIKVDTKKVTERDKKDYWILTRPKEAKKLISSKERQQVEDKKISDDDLYQLQLKRITDKQLNELTDKDMQILAIKRQMDSGYALTPQYIKNEDVSAKEMAVVSEHLDELPGVDVTSDWEREYPYKNLLRSVLGSVSSSNEGLPSNLLDHYLSLGYSRNDRVGKSYLEYQYESLLQGQKAKVENITDSKGNVTGTKTVSEGKAGKDLVLTIDIDLQKSVEKIIEKKLKAAKARPSTELLDRAFVVMMDPRNGEVLTMAGKQIKRENGAYKFDDYALGAMTSSYAMGSAVKGATVLTGLQTGAINLNTVFKDEPLYIGQDKRGKKSWQNLGPVGIQTALEKSSNVFMFKTAIAVGKGEYKPHQALPLDTSAFDTFRNYFSQFGLGVKTGIDLPNEMTGYKGTSRLSGFLLDFAIGQYDTYTPLELAQYVSTIANGGYRMKPQLVKEVRDSNAKKGIGAVVDSVQPEVLNKVDMKSSYIEEVQAGFRRVATKGTAAGQLASASYKPAAKTGTAQSFYDGPDKSKTGTDTYNTTLVAYAPADNPEIAISVVVPWTYIDYNQRYSITNEIGREVMDKYFELKSKQDKEGTQQKNKDKIEENAENTTSSDN.

Residues 22–42 (LNILFLAAFVIFTWIIVELGI) form a helical membrane-spanning segment. Serine 397 functions as the Acyl-ester intermediate in the catalytic mechanism. A compositionally biased stretch (basic and acidic residues) spans 689–706 (SKQDKEGTQQKNKDKIEE). The interval 689–716 (SKQDKEGTQQKNKDKIEENAENTTSSDN) is disordered.

The protein belongs to the transpeptidase family.

It localises to the cell membrane. Its subcellular location is the forespore inner membrane. The catalysed reaction is Preferential cleavage: (Ac)2-L-Lys-D-Ala-|-D-Ala. Also transpeptidation of peptidyl-alanyl moieties that are N-acyl substituents of D-alanine.. It functions in the pathway cell wall biogenesis; peptidoglycan biosynthesis. In terms of biological role, involved in the synthesis of peptidoglycan associated with cell wall elongation, especially following spore germination. Has a partially redundant function with PBP 1 (ponA) or PBP 4 (pbpD) during spore outgrowth. Plays a redundant role with PbpH in determining the rod shape of the cell during vegetative growth and spore outgrowth. The protein is Penicillin-binding protein 2A of Bacillus subtilis (strain 168).